The sequence spans 462 residues: Cysteine--tRNA ligase (462 aa).

Residue C28 participates in Zn(2+) binding. The 'HIGH' region signature appears at 30 to 40; sequence MTVYDYCHLGH. C209, H234, and E238 together coordinate Zn(2+). Residues 266 to 270 carry the 'KMSKS' region motif; the sequence is KMAKS. K269 provides a ligand contact to ATP.

This sequence belongs to the class-I aminoacyl-tRNA synthetase family. In terms of assembly, monomer. The cofactor is Zn(2+).

It localises to the cytoplasm. The catalysed reaction is tRNA(Cys) + L-cysteine + ATP = L-cysteinyl-tRNA(Cys) + AMP + diphosphate. The sequence is that of Cysteine--tRNA ligase from Alkalilimnicola ehrlichii (strain ATCC BAA-1101 / DSM 17681 / MLHE-1).